The primary structure comprises 165 residues: MAKGGNKKATAAARAAANRLLADNRLARHQYEILDTLETGIELVGTEVKSIRAGQANLRDGFCLIRKGELQLHNVHISPHSHAGSYFNHDPLRTRKLLAHRREIDKLRGQLDRKGLTLIPLNLHLKGSWIKLTIGLGKGRKLHDKRQDEKRKQADREVKSALARY.

The interval 141–165 (KLHDKRQDEKRKQADREVKSALARY) is disordered. Basic and acidic residues predominate over residues 145-159 (KRQDEKRKQADREVK).

Belongs to the SmpB family.

It localises to the cytoplasm. Required for rescue of stalled ribosomes mediated by trans-translation. Binds to transfer-messenger RNA (tmRNA), required for stable association of tmRNA with ribosomes. tmRNA and SmpB together mimic tRNA shape, replacing the anticodon stem-loop with SmpB. tmRNA is encoded by the ssrA gene; the 2 termini fold to resemble tRNA(Ala) and it encodes a 'tag peptide', a short internal open reading frame. During trans-translation Ala-aminoacylated tmRNA acts like a tRNA, entering the A-site of stalled ribosomes, displacing the stalled mRNA. The ribosome then switches to translate the ORF on the tmRNA; the nascent peptide is terminated with the 'tag peptide' encoded by the tmRNA and targeted for degradation. The ribosome is freed to recommence translation, which seems to be the essential function of trans-translation. The sequence is that of SsrA-binding protein from Prochlorococcus marinus (strain MIT 9313).